A 124-amino-acid polypeptide reads, in one-letter code: Small ribosomal subunit protein uS13 (124 aa).

Residues 92–117 (RRGLPVRGQRTKSNARTRKGPRKTVA) show a composition bias toward basic residues. The segment at 92 to 124 (RRGLPVRGQRTKSNARTRKGPRKTVANKKIESK) is disordered.

Belongs to the universal ribosomal protein uS13 family. As to quaternary structure, part of the 30S ribosomal subunit. Forms a loose heterodimer with protein S19. Forms two bridges to the 50S subunit in the 70S ribosome.

Located at the top of the head of the 30S subunit, it contacts several helices of the 16S rRNA. In the 70S ribosome it contacts the 23S rRNA (bridge B1a) and protein L5 of the 50S subunit (bridge B1b), connecting the 2 subunits; these bridges are implicated in subunit movement. Contacts the tRNAs in the A and P-sites. This chain is Small ribosomal subunit protein uS13, found in Mycoplasmoides gallisepticum (strain R(low / passage 15 / clone 2)) (Mycoplasma gallisepticum).